A 308-amino-acid chain; its full sequence is D-alanine--D-alanine ligase (308 aa).

One can recognise an ATP-grasp domain in the interval 102-302 (KKVAAAAGIP…FGDLVSWMVE (201 aa)). Residue 128–183 (PLQPPYVVKPVREGSSFGVVIVKEDQSHPPQILTSSEWPFGNQVMVERYIHGRELT) participates in ATP binding. Positions 252, 269, and 271 each coordinate Mg(2+).

Belongs to the D-alanine--D-alanine ligase family. Mg(2+) serves as cofactor. It depends on Mn(2+) as a cofactor.

The protein localises to the cytoplasm. It catalyses the reaction 2 D-alanine + ATP = D-alanyl-D-alanine + ADP + phosphate + H(+). The protein operates within cell wall biogenesis; peptidoglycan biosynthesis. Its function is as follows. Cell wall formation. The sequence is that of D-alanine--D-alanine ligase from Agrobacterium fabrum (strain C58 / ATCC 33970) (Agrobacterium tumefaciens (strain C58)).